The sequence spans 749 residues: 5-methyltetrahydropteroyltriglutamate--homocysteine methyltransferase (749 aa).

Residues 15 to 18 (RELK) and lysine 114 contribute to the 5-methyltetrahydropteroyltri-L-glutamate site. Residues 425-427 (IGS) and glutamate 478 contribute to the L-homocysteine site. Residues 425-427 (IGS) and glutamate 478 each bind L-methionine. Tryptophan 555 lines the 5-methyltetrahydropteroyltri-L-glutamate pocket. Aspartate 593 contacts L-homocysteine. Aspartate 593 contributes to the L-methionine binding site. Residue glutamate 599 coordinates 5-methyltetrahydropteroyltri-L-glutamate. 3 residues coordinate Zn(2+): histidine 636, cysteine 638, and glutamate 660. Histidine 689 (proton donor) is an active-site residue. Position 721 (cysteine 721) interacts with Zn(2+).

It belongs to the vitamin-B12 independent methionine synthase family. The cofactor is Zn(2+).

It carries out the reaction 5-methyltetrahydropteroyltri-L-glutamate + L-homocysteine = tetrahydropteroyltri-L-glutamate + L-methionine. Its pathway is amino-acid biosynthesis; L-methionine biosynthesis via de novo pathway; L-methionine from L-homocysteine (MetE route): step 1/1. Catalyzes the transfer of a methyl group from 5-methyltetrahydrofolate to homocysteine resulting in methionine formation. In Streptococcus pneumoniae serotype 19F (strain G54), this protein is 5-methyltetrahydropteroyltriglutamate--homocysteine methyltransferase.